Reading from the N-terminus, the 412-residue chain is rRNA methyltransferase 1, mitochondrial (412 aa).

A mitochondrion-targeting transit peptide spans 1-20 (MTSLTNAVFKRYLAVTPSAH).

It belongs to the class IV-like SAM-binding methyltransferase superfamily. RNA methyltransferase TrmH family.

The protein resides in the mitochondrion. It catalyses the reaction guanosine(2270) in 21S rRNA + S-adenosyl-L-methionine = 2'-O-methylguanosine(2270) in 21S rRNA + S-adenosyl-L-homocysteine + H(+). S-adenosyl-L-methionine-dependent 2'-O-ribose methyltransferase that catalyzes the formation of 2'-O-methylguanosine at position 2270 (Gm2270) in the 21S mitochondrial large subunit ribosomal RNA (mtLSU rRNA), a universally conserved modification in the peptidyl transferase domain of the mtLSU rRNA. This modification seems to be important for the normal accumulation of the mitochondrial large ribosomal subunit. This is rRNA methyltransferase 1, mitochondrial from Saccharomyces cerevisiae (strain ATCC 204508 / S288c) (Baker's yeast).